The chain runs to 419 residues: D-galactonate dehydratase family member SEN1436 (419 aa).

Substrate is bound by residues Q45 and H129. The active-site Proton donor/acceptor is Y160. D225 is a binding site for Mg(2+). H227 serves as the catalytic Proton donor/acceptor. E251 and E277 together coordinate Mg(2+). Substrate-binding residues include E277, R298, H327, D331, and E354.

It belongs to the mandelate racemase/muconate lactonizing enzyme family. GalD subfamily. Homotetramer. Mg(2+) is required as a cofactor.

It carries out the reaction D-gluconate = 2-dehydro-3-deoxy-D-gluconate + H2O. Has low D-gluconate dehydratase activity (in vitro), suggesting that it has no significant role in D-gluconate degradation in vivo. Has no detectable activity with a panel of 70 other acid sugars (in vitro). This chain is D-galactonate dehydratase family member SEN1436, found in Salmonella enteritidis PT4 (strain P125109).